Here is a 117-residue protein sequence, read N- to C-terminus: Ribosome-binding factor A (117 aa).

The protein belongs to the RbfA family. Monomer. Binds 30S ribosomal subunits, but not 50S ribosomal subunits or 70S ribosomes.

The protein resides in the cytoplasm. One of several proteins that assist in the late maturation steps of the functional core of the 30S ribosomal subunit. Associates with free 30S ribosomal subunits (but not with 30S subunits that are part of 70S ribosomes or polysomes). Required for efficient processing of 16S rRNA. May interact with the 5'-terminal helix region of 16S rRNA. The polypeptide is Ribosome-binding factor A (Leuconostoc mesenteroides subsp. mesenteroides (strain ATCC 8293 / DSM 20343 / BCRC 11652 / CCM 1803 / JCM 6124 / NCDO 523 / NBRC 100496 / NCIMB 8023 / NCTC 12954 / NRRL B-1118 / 37Y)).